A 150-amino-acid polypeptide reads, in one-letter code: Autophagy-related protein 16 (150 aa).

Positions 1–23 (MGNFIITERKKAKEERSNPQTDS) are disordered. The segment covering 7–17 (TERKKAKEERS) has biased composition (basic and acidic residues). The stretch at 61–130 (DDALLNTLAI…KKEHSQLVAR (70 aa)) forms a coiled coil.

The protein belongs to the ATG16 family. As to quaternary structure, homodimer. Part of the 350 kDa complex which is at least composed of ATG5, ATG12 and ATG16. Several units of each may be present in this complex. Interacts directly with ATG12.

The protein resides in the preautophagosomal structure membrane. Its function is as follows. Stabilizes the ATG5-ATG12 conjugate and mediates the formation of the 350 kDa complex, which is necessary for autophagy. The ATG5-ATG12/ATG16 complex is required for efficient promotion of ATG8-conjugation to phosphatidylethanolamine and ATG8 localization to the pre-autophagosomal structure (PAS). Also recruits ATG3 to the PAS. Involved in endoplasmic reticulum-specific autophagic process and is essential for the survival of cells subjected to severe ER stress. The protein is Autophagy-related protein 16 (ATG16) of Saccharomyces cerevisiae (strain YJM789) (Baker's yeast).